A 397-amino-acid chain; its full sequence is Tryptophan synthase beta chain (397 aa).

Residue Lys88 is modified to N6-(pyridoxal phosphate)lysine.

This sequence belongs to the TrpB family. In terms of assembly, tetramer of two alpha and two beta chains. Requires pyridoxal 5'-phosphate as cofactor.

It catalyses the reaction (1S,2R)-1-C-(indol-3-yl)glycerol 3-phosphate + L-serine = D-glyceraldehyde 3-phosphate + L-tryptophan + H2O. It functions in the pathway amino-acid biosynthesis; L-tryptophan biosynthesis; L-tryptophan from chorismate: step 5/5. Its function is as follows. The beta subunit is responsible for the synthesis of L-tryptophan from indole and L-serine. This chain is Tryptophan synthase beta chain (trpB), found in Haemophilus influenzae (strain ATCC 51907 / DSM 11121 / KW20 / Rd).